The following is a 299-amino-acid chain: Lipoyl synthase 2 (299 aa).

[4Fe-4S] cluster is bound by residues Cys43, Cys48, Cys54, Cys69, Cys73, Cys76, and Ser294. Residues 55-283 (YAAGTATFLL…GAVARDLGFA (229 aa)) enclose the Radical SAM core domain.

It belongs to the radical SAM superfamily. Lipoyl synthase family. Requires [4Fe-4S] cluster as cofactor.

Its subcellular location is the cytoplasm. It catalyses the reaction [[Fe-S] cluster scaffold protein carrying a second [4Fe-4S](2+) cluster] + N(6)-octanoyl-L-lysyl-[protein] + 2 oxidized [2Fe-2S]-[ferredoxin] + 2 S-adenosyl-L-methionine + 4 H(+) = [[Fe-S] cluster scaffold protein] + N(6)-[(R)-dihydrolipoyl]-L-lysyl-[protein] + 4 Fe(3+) + 2 hydrogen sulfide + 2 5'-deoxyadenosine + 2 L-methionine + 2 reduced [2Fe-2S]-[ferredoxin]. Its pathway is protein modification; protein lipoylation via endogenous pathway; protein N(6)-(lipoyl)lysine from octanoyl-[acyl-carrier-protein]: step 2/2. Its function is as follows. Catalyzes the radical-mediated insertion of two sulfur atoms into the C-6 and C-8 positions of the octanoyl moiety bound to the lipoyl domains of lipoate-dependent enzymes, thereby converting the octanoylated domains into lipoylated derivatives. The chain is Lipoyl synthase 2 from Parasynechococcus marenigrum (strain WH8102).